Here is a 730-residue protein sequence, read N- to C-terminus: MEISPGSSTHERDRKGSYGHRERTRSHSGSPSRFYSKDKRGSSRQGVRPRDRDSKDSISPQYKQRNWSRGGGGGGRDRGRNDFSYRKKGKDYNKRRDKRSRSRSRHRSPKRSGSSKKSKRRNSSGSSSSDLMDTSLMSELKKHGDYGSSSKSKKKSRKRRKHSSSSSSSSGEAMDLPVSSNGMNVTAIPPPPSFNINPFQPMFSQPPPPPLPPNSQFMTPPPRPPPAPFSIPPPSVDIHFAATASFSLSSIPPPPPQTDGGASSSKRQDPLPMPPDSKRIATRPVITTRRGHATNRPSDSDSWYKTNLTHYTMLDQIGEGTYGQVYKAVNNLTGEQVALKRVRLENEKEGFPITAIREIKILRQLHHKNIVRLMDIVIDDISMDELKRTRANFYLVFEYVDHDLIGLLESKELVDFNKDQICSLFKQLLEGLAYIHNTGFLHRDIKCSNILVNNKGELKIADLGLARLWEKESRLYTNRVITLWYRPPELLLGDERYGPAIDVWSTGCMLGELFTRKPLFNGNNEFGQLELISKVCGSPNVDNWPELTELVGWNTFRMKRTYQRRIREEFEHIMPREAVDLLDKMLTLNPEKRISAKEALNHPWIRSLEHTTVQPLKLPQHQDCHEMWSKKQKKSARLGRQAEGSSGSGHSIRATSHPRAPTQPSTTTTKSNGSSNHHHHHHHSHHHASSLPPSGGHAPPPPPPPTQASSTSHNNHQPVPQSQYQSVFFK.

Disordered regions lie at residues methionine 1–serine 230 and phenylalanine 246–arginine 283. Residues threonine 9–arginine 21 are compositionally biased toward basic and acidic residues. Over residues serine 57–tryptophan 67 the composition is skewed to polar residues. The span at glycine 75–lysine 94 shows a compositional bias: basic and acidic residues. Composition is skewed to basic residues over residues arginine 95 to asparagine 122 and lysine 151 to serine 163. Residues phenylalanine 194–phenylalanine 203 are compositionally biased toward low complexity. The span at serine 204–serine 230 shows a compositional bias: pro residues. In terms of domain architecture, Protein kinase spans methionine 313–isoleucine 605. Residues isoleucine 317–valine 325, lysine 340, and glutamate 398–aspartate 403 contribute to the ATP site. The active-site Proton acceptor is aspartate 444. The interval aspartate 623–lysine 730 is disordered. Histidine 625 is an ATP binding site. The span at asparagine 676–alanine 688 shows a compositional bias: basic residues. Positions asparagine 714–lysine 730 are enriched in polar residues.

The protein belongs to the protein kinase superfamily. CMGC Ser/Thr protein kinase family. CDC2/CDKX subfamily.

It is found in the nucleus. The enzyme catalyses [DNA-directed RNA polymerase] + ATP = phospho-[DNA-directed RNA polymerase] + ADP + H(+). It catalyses the reaction L-seryl-[protein] + ATP = O-phospho-L-seryl-[protein] + ADP + H(+). It carries out the reaction L-threonyl-[protein] + ATP = O-phospho-L-threonyl-[protein] + ADP + H(+). Functionally, cyclin-dependent kinase which displays CTD kinase activity: hyperphosphorylates 'Ser-2' in the C-terminal heptapeptide repeat domain (CTD) of the largest RNA polymerase II subunit, thereby acting as a key regulator of transcription elongation. Required for normal reproduction. The sequence is that of Cyclin-dependent kinase 12 from Caenorhabditis elegans.